Reading from the N-terminus, the 218-residue chain is Peptide methionine sulfoxide reductase A2 (218 aa).

The segment covering 1 to 19 (MDSSLKTQEPQVVETSPSP) has biased composition (polar residues). The segment at 1–30 (MDSSLKTQEPQVVETSPSPVAQEPPQVADK) is disordered. Position 205 is a phosphoserine (serine 205).

This sequence belongs to the MsrA Met sulfoxide reductase family.

The protein resides in the cytoplasm. It is found in the cytosol. It carries out the reaction L-methionyl-[protein] + [thioredoxin]-disulfide + H2O = L-methionyl-(S)-S-oxide-[protein] + [thioredoxin]-dithiol. The catalysed reaction is [thioredoxin]-disulfide + L-methionine + H2O = L-methionine (S)-S-oxide + [thioredoxin]-dithiol. Activated during dark in short day conditions. In terms of biological role, catalyzes the reduction of methionine sulfoxide (MetSO) to methionine in proteins. Plays a protective role against oxidative stress by restoring activity to proteins that have been inactivated by methionine oxidation. Prevents cellular oxidative damage in long nights. MSRA family specifically reduces the MetSO S-enantiomer. The chain is Peptide methionine sulfoxide reductase A2 (MRSA2) from Arabidopsis thaliana (Mouse-ear cress).